The primary structure comprises 290 residues: 4-hydroxybenzoate octaprenyltransferase (290 aa).

Transmembrane regions (helical) follow at residues I23–V43, L46–V66, L99–I119, L141–V161, E163–Y183, L213–N233, G234–Q254, and A268–W288.

Belongs to the UbiA prenyltransferase family. It depends on Mg(2+) as a cofactor.

Its subcellular location is the cell inner membrane. The enzyme catalyses all-trans-octaprenyl diphosphate + 4-hydroxybenzoate = 4-hydroxy-3-(all-trans-octaprenyl)benzoate + diphosphate. It participates in cofactor biosynthesis; ubiquinone biosynthesis. In terms of biological role, catalyzes the prenylation of para-hydroxybenzoate (PHB) with an all-trans polyprenyl group. Mediates the second step in the final reaction sequence of ubiquinone-8 (UQ-8) biosynthesis, which is the condensation of the polyisoprenoid side chain with PHB, generating the first membrane-bound Q intermediate 3-octaprenyl-4-hydroxybenzoate. The protein is 4-hydroxybenzoate octaprenyltransferase of Escherichia coli (strain UTI89 / UPEC).